A 274-amino-acid chain; its full sequence is Thiazole synthase (274 aa).

Catalysis depends on Lys111, which acts as the Schiff-base intermediate with DXP. Residues Gly172, 198-199, and 220-221 each bind 1-deoxy-D-xylulose 5-phosphate; these read AG and NT.

Belongs to the ThiG family. Homotetramer. Forms heterodimers with either ThiH or ThiS.

It is found in the cytoplasm. It carries out the reaction [ThiS sulfur-carrier protein]-C-terminal-Gly-aminoethanethioate + 2-iminoacetate + 1-deoxy-D-xylulose 5-phosphate = [ThiS sulfur-carrier protein]-C-terminal Gly-Gly + 2-[(2R,5Z)-2-carboxy-4-methylthiazol-5(2H)-ylidene]ethyl phosphate + 2 H2O + H(+). Its pathway is cofactor biosynthesis; thiamine diphosphate biosynthesis. Its function is as follows. Catalyzes the rearrangement of 1-deoxy-D-xylulose 5-phosphate (DXP) to produce the thiazole phosphate moiety of thiamine. Sulfur is provided by the thiocarboxylate moiety of the carrier protein ThiS. In vitro, sulfur can be provided by H(2)S. The protein is Thiazole synthase of Gloeobacter violaceus (strain ATCC 29082 / PCC 7421).